Consider the following 132-residue polypeptide: Small ribosomal subunit protein uS11 (132 aa).

It belongs to the universal ribosomal protein uS11 family. Part of the 30S ribosomal subunit.

Its function is as follows. Located on the platform of the 30S subunit. The chain is Small ribosomal subunit protein uS11 (rps11) from Korarchaeum cryptofilum (strain OPF8).